Consider the following 186-residue polypeptide: Peptidyl-tRNA hydrolase (186 aa).

Tyr-14 is a tRNA binding site. His-19 acts as the Proton acceptor in catalysis. TRNA-binding residues include Tyr-64, Asn-66, and Asn-112.

This sequence belongs to the PTH family. Monomer.

It localises to the cytoplasm. It catalyses the reaction an N-acyl-L-alpha-aminoacyl-tRNA + H2O = an N-acyl-L-amino acid + a tRNA + H(+). Its function is as follows. Hydrolyzes ribosome-free peptidyl-tRNAs (with 1 or more amino acids incorporated), which drop off the ribosome during protein synthesis, or as a result of ribosome stalling. In terms of biological role, catalyzes the release of premature peptidyl moieties from peptidyl-tRNA molecules trapped in stalled 50S ribosomal subunits, and thus maintains levels of free tRNAs and 50S ribosomes. This is Peptidyl-tRNA hydrolase from Lachnospira eligens (strain ATCC 27750 / DSM 3376 / VPI C15-48 / C15-B4) (Eubacterium eligens).